The chain runs to 298 residues: 4-hydroxybenzoate octaprenyltransferase (298 aa).

A run of 7 helical transmembrane segments spans residues 30 to 50, 54 to 74, 105 to 125, 148 to 168, 218 to 238, 240 to 260, and 275 to 295; these read IGTW…AEGI, GTLL…CVVN, VLFA…NLPT, FPQV…FMAI, DRLM…WVGL, LALG…FVFQ, and AFLN…LSLW.

This sequence belongs to the UbiA prenyltransferase family. Mg(2+) serves as cofactor.

Its subcellular location is the cell inner membrane. It carries out the reaction all-trans-octaprenyl diphosphate + 4-hydroxybenzoate = 4-hydroxy-3-(all-trans-octaprenyl)benzoate + diphosphate. It participates in cofactor biosynthesis; ubiquinone biosynthesis. In terms of biological role, catalyzes the prenylation of para-hydroxybenzoate (PHB) with an all-trans polyprenyl group. Mediates the second step in the final reaction sequence of ubiquinone-8 (UQ-8) biosynthesis, which is the condensation of the polyisoprenoid side chain with PHB, generating the first membrane-bound Q intermediate 3-octaprenyl-4-hydroxybenzoate. The sequence is that of 4-hydroxybenzoate octaprenyltransferase from Chromohalobacter salexigens (strain ATCC BAA-138 / DSM 3043 / CIP 106854 / NCIMB 13768 / 1H11).